The primary structure comprises 890 residues: Wolframin (890 aa).

The residue at position 1 (M1) is an N-acetylmethionine. Over residues 1–20 (MNSGTPPPSPSGPPPPPAPQ) the composition is skewed to pro residues. The interval 1–83 (MNSGTPPPSP…ETDRAGPMKA (83 aa)) is disordered. The interval 1 to 323 (MNSGTPPPSP…MHWLSTIVPT (323 aa)) is interaction with ATP6V1A. Phosphothreonine is present on T30. S32 carries the post-translational modification Phosphoserine. Residues 50–67 (PSAGRSAGEAAAPEPRAP) show a composition bias toward low complexity. Over residues 71–83 (SREETDRAGPMKA) the composition is skewed to basic and acidic residues. S158 carries the phosphoserine modification. A disordered region spans residues 208-227 (VNEQDGGAQPGPVPKSLQKQ). A run of 10 helical transmembrane segments spans residues 314-334 (MHWL…FFFI), 340-360 (IDFF…VSMV), 402-422 (NHLE…FSFP), 427-447 (DCIP…TSYM), 465-485 (VAAG…FLKV), 496-516 (GHFI…LFYL), 529-549 (TYCY…SVVI), 563-583 (IGYF…ALMG), 589-609 (RWFL…CGVP), and 632-652 (SSMV…CWFY). Residues 653–869 (VYRSEGMKVY…HVKIEQDWRS (217 aa)) are Lumenal-facing. Residues N663 and N748 are each glycosylated (N-linked (GlcNAc...) asparagine). The helical transmembrane segment at 870-890 (TVHGALKFAFDFFFFPFLSAA) threads the bilayer.

As to quaternary structure, interacts with ATP6V1A. In terms of tissue distribution, highly expressed in the developing lens.

It is found in the endoplasmic reticulum membrane. The protein localises to the cytoplasmic vesicle. The protein resides in the secretory vesicle. Participates in the regulation of cellular Ca(2+) homeostasis, at least partly, by modulating the filling state of the endoplasmic reticulum Ca(2+) store. Negatively regulates the ER stress response and positively regulates the stability of V-ATPase subunits ATP6V1A and ATP1B1 by preventing their degradation through an unknown proteasome-independent mechanism. The sequence is that of Wolframin (Wfs1) from Mus musculus (Mouse).